We begin with the raw amino-acid sequence, 391 residues long: Tumor susceptibility gene 101 protein (391 aa).

Residue Ala2 is modified to N-acetylalanine. Positions 2–145 constitute a UEV domain; it reads AVSESQLKKM…GEEPPVFSRP (144 aa). Residues 159–163 form an interaction with CEP55 region; sequence PPNTS. The disordered stretch occupies residues 197-220; it reads YPATTSSQYPSQPPVTTVGPSRDG. A compositionally biased stretch (polar residues) spans 200 to 215; it reads TTSSQYPSQPPVTTVG. Position 221 is a phosphothreonine (Thr221). Residues 237–317 are a coiled coil; it reads DKLRWRMKEE…NQSENNDIDE (81 aa). The PTAP/PSAP motif motif lies at 321-324; it reads PTAP. Residues 323-391 form the SB domain; it reads APLYKQILNL…RKTAGLSDLY (69 aa).

The protein belongs to the ubiquitin-conjugating enzyme family. UEV subfamily. In terms of assembly, component of the ESCRT-I complex (endosomal sorting complex required for transport I) which consists of TSG101, VPS28, a VPS37 protein (VPS37A to -D) and MVB12A or MVB12B in a 1:1:1:1 stoichiometry. Interacts with VPS37A, VPS37B and VPS37C. Component of an ESCRT-I complex (endosomal sorting complex required for transport I) which consists of TSG101, VPS28, VPS37A and UBAP1 in a 1:1:1:1 stoichiometry. Interacts with DMAP1. Interacts with GMCL. Interacts with ubiquitin, stathmin and AATF. Interacts with HGS; the interaction mediates the association with the ESCRT-0 complex. Interacts with GGA1 and GGA3. Interacts (via UEV domain) with PDCD6IP/AIP1. Interacts with VPS28, SNF8 and VPS36. Self-associates. Interacts with MVB12A; the association appears to be mediated by the TSG101-VPS37 binary subcomplex. Interacts with VPS37D. Interacts with LRSAM1. Interacts with CEP55; the interaction is required for cytokinesis. Interacts with PDCD6. Interacts with LITAF. Interacts with murine leukemia virus Gag polyprotein (via PSAP motif). Interacts with MGRN1. Interacts with ARRDC1; recruits TSG101 to the plasma membrane. Monoubiquitinated at multiple sites by LRSAM1 and by MGRN1. Ubiquitination inactivates it, possibly by regulating its shuttling between an active membrane-bound protein and an inactive soluble form. Ubiquitination by MGRN1 requires the presence of UBE2D1. In terms of tissue distribution, ubiquitous. Higher expression in brain and mammary gland. Lower expression in liver and tumoral tissues.

It localises to the cytoplasm. Its subcellular location is the early endosome membrane. It is found in the late endosome membrane. The protein localises to the cytoskeleton. The protein resides in the microtubule organizing center. It localises to the centrosome. Its subcellular location is the midbody. It is found in the midbody ring. The protein localises to the nucleus. In terms of biological role, component of the ESCRT-I complex, a regulator of vesicular trafficking process. Binds to ubiquitinated cargo proteins and is required for the sorting of endocytic ubiquitinated cargos into multivesicular bodies (MVBs). Mediates the association between the ESCRT-0 and ESCRT-I complex. Required for completion of cytokinesis; the function requires CEP55. May be involved in cell growth and differentiation. Acts as a negative growth regulator. Required for the exosomal release of SDCBP, CD63 and syndecan. It may also play a role in the extracellular release of microvesicles that differ from the exosomes. The polypeptide is Tumor susceptibility gene 101 protein (Tsg101) (Mus musculus (Mouse)).